Reading from the N-terminus, the 333-residue chain is tRNA U34 carboxymethyltransferase (333 aa).

Carboxy-S-adenosyl-L-methionine-binding positions include lysine 97, tryptophan 111, lysine 116, glycine 136, 158-160 (DPS), 189-190 (IE), methionine 205, tyrosine 209, and arginine 324.

Belongs to the class I-like SAM-binding methyltransferase superfamily. CmoB family. As to quaternary structure, homotetramer.

The enzyme catalyses carboxy-S-adenosyl-L-methionine + 5-hydroxyuridine(34) in tRNA = 5-carboxymethoxyuridine(34) in tRNA + S-adenosyl-L-homocysteine + H(+). Functionally, catalyzes carboxymethyl transfer from carboxy-S-adenosyl-L-methionine (Cx-SAM) to 5-hydroxyuridine (ho5U) to form 5-carboxymethoxyuridine (cmo5U) at position 34 in tRNAs. The polypeptide is tRNA U34 carboxymethyltransferase (Chromohalobacter salexigens (strain ATCC BAA-138 / DSM 3043 / CIP 106854 / NCIMB 13768 / 1H11)).